We begin with the raw amino-acid sequence, 502 residues long: uncharacterized protein (502 aa).

This is an uncharacterized protein from Frog virus 3 (isolate Goorha) (FV-3).